The sequence spans 294 residues: Proline iminopeptidase (294 aa).

The region spanning 27-277 (PPLVLLHGGP…GCGHMSFVEK (251 aa)) is the AB hydrolase-1 domain. Ser105 (nucleophile) is an active-site residue. The active site involves Asp244. Catalysis depends on His271, which acts as the Proton donor.

It belongs to the peptidase S33 family.

The protein resides in the cell envelope. The catalysed reaction is Release of N-terminal proline from a peptide.. Releases the N-terminal proline from various substrates. In Lactobacillus helveticus (strain DPC 4571), this protein is Proline iminopeptidase.